A 1267-amino-acid chain; its full sequence is MINYLKFNRFCFSKKKFFHKCNLPYLLHNQIGSYNSFLSSKYNSLFSIKKVLKQYFPLICNNKNIFIKLKKIELLEPCNTEKYTKIRNLHLFSTLYMYISIYVINKNLNVYKKIFLGNIPSMTKKGNFIINGIDRILISQFTKSYGIYFYTEKKKKKCIIIPLKGSWLEFIITNNFLIVFDKKINFEINVFLICLGYNKKYFFNFFFFKIKIKIIRGKKRIFFLLNKKKYFYKIYNKYICISIKKILGKLFGKNYFLKKNTFLKFNIIDINKVNLILNYPIYFFFIIFLKKIINLNYLIYIYKNFKLKINKELLQYKKGYIINFFRNLFYKKKYFYSLIGAKRIFKRLFLKKNNKLTIYLEIIKKILKFIKFNIQNDNFDNLENKLILNCGKLLSIKFDFLFKKVIKFINYKMNNFKKYKDLDFIVNSDIITIGLKDYFCNNELSQFLDQNNPLAEISHNRKISLISGIGIEKENCGFDIRDIHYSHYCKVCPIDTPEGHNIGLINSLAYLSKVNKYNFISTIYKISILGKILGITFLDNKFDKHKFIVNFNSTIETIYGEIFRSPYFEARKTNYYYYKKFLNIDLIEICGDQIISVGASLIPFLSHNDANRCLMGSNMQRQAVPLIDSENPIVGTGNELEIGLNSNYNILSDLNGYVLYSDNYKIIIKNNNFIKTYFLEKYTRTNQNTILNQYTKVLKGDFVKVGNIIADSNSTKNGEISLGKNLRVAFMSWYGYNFEDSILLSSSILNKNNFNSIHIYEFITVLKYNENGFEIVSNECFGSNEKIKNKVKNGIIKIGEFVFSKDVIVGKMIPKKKRKFSPEEKLFKIVFSESNFNYYEQPLTVPKNIKGTIIAVNDFKIFYFKNKIFKLLKFEQLNYTCKNINNFFYETFNYYLTKIKKLLFNNKITIKKKRINSYNININNIFKIKCFNKKINFKLNIFKNIISNELLKKKNIFVYKKINFIKHDDFENSIIRIIKIKIAVKKQIAIGDKMSGRHGNKGVVSNIIDYENMPYDKFGNKIDLILNPLGVPSRMNVGQLLEVFLAGSLNLIKSFFLKIKNLNKISYFKMKLFIKIIFKCIYDKNINLNIFNNSLVLKIFKNIKNQLNVCVHNFYNFNVNKVNNIIKTIGINKNCELLLFDGITGKRYLQLVNVGYIYFMKLNHLVIDKIYSRSIGPYSIVTQQPLGGKSNLGGQRLGEMEVWALEAYGAAFLLKEMLTIKSDDILGRIELYKNIIKGINDANSGIPESFQVLMKEIQSLCFDIKIL.

Belongs to the RNA polymerase beta chain family. As to quaternary structure, the RNAP catalytic core consists of 2 alpha, 1 beta, 1 beta' and 1 omega subunit. When a sigma factor is associated with the core the holoenzyme is formed, which can initiate transcription.

It catalyses the reaction RNA(n) + a ribonucleoside 5'-triphosphate = RNA(n+1) + diphosphate. Its function is as follows. DNA-dependent RNA polymerase catalyzes the transcription of DNA into RNA using the four ribonucleoside triphosphates as substrates. The polypeptide is DNA-directed RNA polymerase subunit beta (rpoB) (Carsonella ruddii (strain PV)).